We begin with the raw amino-acid sequence, 94 residues long: Cell division topological specificity factor (94 aa).

It belongs to the MinE family.

Prevents the cell division inhibition by proteins MinC and MinD at internal division sites while permitting inhibition at polar sites. This ensures cell division at the proper site by restricting the formation of a division septum at the midpoint of the long axis of the cell. This Beijerinckia indica subsp. indica (strain ATCC 9039 / DSM 1715 / NCIMB 8712) protein is Cell division topological specificity factor.